We begin with the raw amino-acid sequence, 153 residues long: Allergen Pet c 1 (153 aa).

It belongs to the BetVI family. In terms of assembly, may form dimers.

This Petroselinum crispum (Parsley) protein is Allergen Pet c 1.